The following is a 64-amino-acid chain: UPF0434 protein Bcep18194_A5877 (64 aa).

The protein belongs to the UPF0434 family.

This chain is UPF0434 protein Bcep18194_A5877, found in Burkholderia lata (strain ATCC 17760 / DSM 23089 / LMG 22485 / NCIMB 9086 / R18194 / 383).